Reading from the N-terminus, the 100-residue chain is ATP synthase subunit c (100 aa).

Helical transmembrane passes span F26–M46 and M71–I91.

The protein belongs to the ATPase C chain family. F-type ATPases have 2 components, F(1) - the catalytic core - and F(0) - the membrane proton channel. F(1) has five subunits: alpha(3), beta(3), gamma(1), delta(1), epsilon(1). F(0) has three main subunits: a(1), b(2) and c(10-14). The alpha and beta chains form an alternating ring which encloses part of the gamma chain. F(1) is attached to F(0) by a central stalk formed by the gamma and epsilon chains, while a peripheral stalk is formed by the delta and b chains.

It localises to the cell inner membrane. Its function is as follows. F(1)F(0) ATP synthase produces ATP from ADP in the presence of a proton or sodium gradient. F-type ATPases consist of two structural domains, F(1) containing the extramembraneous catalytic core and F(0) containing the membrane proton channel, linked together by a central stalk and a peripheral stalk. During catalysis, ATP synthesis in the catalytic domain of F(1) is coupled via a rotary mechanism of the central stalk subunits to proton translocation. Functionally, key component of the F(0) channel; it plays a direct role in translocation across the membrane. A homomeric c-ring of between 10-14 subunits forms the central stalk rotor element with the F(1) delta and epsilon subunits. In Campylobacter fetus subsp. fetus (strain 82-40), this protein is ATP synthase subunit c.